Consider the following 361-residue polypeptide: Putative F-box protein At3g18340 (361 aa).

The 46-residue stretch at 1–46 (MASGKLPWELEEEILCRLPPGSLVRLRSVCKHWNDLYNDKWFIKKS) folds into the F-box domain.

The protein is Putative F-box protein At3g18340 of Arabidopsis thaliana (Mouse-ear cress).